The following is a 257-amino-acid chain: Acyl-[acyl-carrier-protein]--UDP-N-acetylglucosamine O-acyltransferase (257 aa).

This sequence belongs to the transferase hexapeptide repeat family. LpxA subfamily. As to quaternary structure, homotrimer.

It localises to the cytoplasm. It catalyses the reaction a (3R)-hydroxyacyl-[ACP] + UDP-N-acetyl-alpha-D-glucosamine = a UDP-3-O-[(3R)-3-hydroxyacyl]-N-acetyl-alpha-D-glucosamine + holo-[ACP]. It participates in glycolipid biosynthesis; lipid IV(A) biosynthesis; lipid IV(A) from (3R)-3-hydroxytetradecanoyl-[acyl-carrier-protein] and UDP-N-acetyl-alpha-D-glucosamine: step 1/6. Functionally, involved in the biosynthesis of lipid A, a phosphorylated glycolipid that anchors the lipopolysaccharide to the outer membrane of the cell. The protein is Acyl-[acyl-carrier-protein]--UDP-N-acetylglucosamine O-acyltransferase of Anaeromyxobacter sp. (strain K).